The following is a 232-amino-acid chain: Polycomb group RING finger protein 5-B (232 aa).

An RING-type zinc finger spans residues Cys18–Gly57. The segment covering Gln93 to Asn104 has biased composition (basic and acidic residues). Residues Gln93 to Tyr128 form a disordered region.

In terms of assembly, component of a PRC1-like complex.

The protein localises to the nucleus. Its function is as follows. Component of Polycomb group (PcG) multiprotein complexes; the complex class is required to maintain the transcriptionally repressive state of some genes. This chain is Polycomb group RING finger protein 5-B (pcgf5b), found in Danio rerio (Zebrafish).